Reading from the N-terminus, the 546-residue chain is Thermolysin (546 aa).

Positions 1–25 are cleaved as a signal peptide; that stretch reads MDKRAMLGAIGLAFGLMAWPFGASA. A propeptide spans 26-228 (activation peptide); it reads KEKSMVWNEQ…EAKPGGGQPV (203 aa). Ca(2+)-binding residues include Asp-287, Asp-289, Gln-291, and Asp-368. His-372 contacts Zn(2+). Residue Glu-373 is part of the active site. The Zn(2+) site is built by His-376 and Glu-396. Positions 413, 415, 417, 420, 423, 424, 427, and 430 each coordinate Ca(2+). His-461 (proton donor) is an active-site residue.

This sequence belongs to the peptidase M4 family. Ca(2+) serves as cofactor. Requires Zn(2+) as cofactor.

Its subcellular location is the secreted. The enzyme catalyses Preferential cleavage: Xaa-|-Leu &gt; Xaa-|-Phe.. In terms of biological role, extracellular zinc metalloprotease. This chain is Thermolysin (npr), found in Bacillus caldolyticus.